We begin with the raw amino-acid sequence, 291 residues long: Acetyl-coenzyme A carboxylase carboxyl transferase subunit beta (291 aa).

Residues 23 to 291 enclose the CoA carboxyltransferase N-terminal domain; sequence VWHKCPSCTA…PPDLPVEESV (269 aa). The Zn(2+) site is built by C27, C30, C46, and C49. The C4-type zinc finger occupies 27–49; that stretch reads CPSCTAVLYRVELERNLEVCPKC.

This sequence belongs to the AccD/PCCB family. Acetyl-CoA carboxylase is a heterohexamer composed of biotin carboxyl carrier protein (AccB), biotin carboxylase (AccC) and two subunits each of ACCase subunit alpha (AccA) and ACCase subunit beta (AccD). Zn(2+) is required as a cofactor.

It localises to the cytoplasm. The catalysed reaction is N(6)-carboxybiotinyl-L-lysyl-[protein] + acetyl-CoA = N(6)-biotinyl-L-lysyl-[protein] + malonyl-CoA. It functions in the pathway lipid metabolism; malonyl-CoA biosynthesis; malonyl-CoA from acetyl-CoA: step 1/1. Its function is as follows. Component of the acetyl coenzyme A carboxylase (ACC) complex. Biotin carboxylase (BC) catalyzes the carboxylation of biotin on its carrier protein (BCCP) and then the CO(2) group is transferred by the transcarboxylase to acetyl-CoA to form malonyl-CoA. The sequence is that of Acetyl-coenzyme A carboxylase carboxyl transferase subunit beta from Coxiella burnetii (strain Dugway 5J108-111).